Reading from the N-terminus, the 517-residue chain is GMP synthase [glutamine-hydrolyzing] (517 aa).

Positions 9-199 (RILILDFGSQ…VLNACGCEGL (191 aa)) constitute a Glutamine amidotransferase type-1 domain. Cys-86 acts as the Nucleophile in catalysis. Residues His-173 and Glu-175 contribute to the active site. The GMPS ATP-PPase domain occupies 200–392 (WTSASIIEDA…LGLPYNMLYR (193 aa)). 227–233 (SGGVDSS) lines the ATP pocket.

As to quaternary structure, homodimer.

It catalyses the reaction XMP + L-glutamine + ATP + H2O = GMP + L-glutamate + AMP + diphosphate + 2 H(+). It participates in purine metabolism; GMP biosynthesis; GMP from XMP (L-Gln route): step 1/1. Its function is as follows. Catalyzes the synthesis of GMP from XMP. The protein is GMP synthase [glutamine-hydrolyzing] of Vibrio atlanticus (strain LGP32) (Vibrio splendidus (strain Mel32)).